Reading from the N-terminus, the 360-residue chain is Protein phosphatase 1 regulatory subunit 7 (360 aa).

The disordered stretch occupies residues 1–64; that stretch reads MAAERGAGQQ…GEEDPEEEHE (64 aa). The residue at position 2 (Ala2) is an N-acetylalanine. Residues Ser12, Ser24, Ser27, Ser44, and Ser47 each carry the phosphoserine modification. Residues 17–34 show a composition bias toward basic and acidic residues; the sequence is EVDRRVESEESGDEEGKK. Acidic residues predominate over residues 53-63; that stretch reads ERGEEDPEEEH. LRR repeat units lie at residues 77–98, 99–120, 121–142, 143–164, 165–186, 187–208, 209–230, 231–252, 253–274, 275–296, and 297–318; these read DAED…EVLK, KVKT…EELQ, SLRE…EALT, ELEI…DKVT, QLKK…SNLH, QLQM…DTLT, NLES…DALT, NLTV…QNLV, NLQE…ENNN, KLTM…SHLT, and EPQE…DELK. Position 322 is a phosphoserine (Ser322). Residues 331–360 form the LRRCT domain; the sequence is NPLQKDPQYRRKVMLALPSVRQIDATFVRF.

This sequence belongs to the SDS22 family. Interacts with PPP1CA, PPP1CB and PPP1CC/PPP1G.

The protein localises to the nucleus. Its function is as follows. Regulatory subunit of protein phosphatase 1. This is Protein phosphatase 1 regulatory subunit 7 (PPP1R7) from Pongo abelii (Sumatran orangutan).